The following is a 149-amino-acid chain: Large ribosomal subunit protein bL9 (149 aa).

The protein belongs to the bacterial ribosomal protein bL9 family.

Its function is as follows. Binds to the 23S rRNA. This chain is Large ribosomal subunit protein bL9, found in Campylobacter curvus (strain 525.92).